The sequence spans 166 residues: uncharacterized protein (166 aa).

This sequence to M.jannaschii MJ0992.

This is an uncharacterized protein from Methanocaldococcus jannaschii (strain ATCC 43067 / DSM 2661 / JAL-1 / JCM 10045 / NBRC 100440) (Methanococcus jannaschii).